We begin with the raw amino-acid sequence, 127 residues long: Large ribosomal subunit protein uL24 (127 aa).

This sequence belongs to the universal ribosomal protein uL24 family. In terms of assembly, part of the 50S ribosomal subunit.

In terms of biological role, one of two assembly initiator proteins, it binds directly to the 5'-end of the 23S rRNA, where it nucleates assembly of the 50S subunit. One of the proteins that surrounds the polypeptide exit tunnel on the outside of the subunit. This is Large ribosomal subunit protein uL24 from Leptospira biflexa serovar Patoc (strain Patoc 1 / ATCC 23582 / Paris).